Reading from the N-terminus, the 155-residue chain is Aspartate carbamoyltransferase regulatory chain (155 aa).

Cysteine 112, cysteine 117, cysteine 138, and cysteine 141 together coordinate Zn(2+).

Belongs to the PyrI family. As to quaternary structure, contains catalytic and regulatory chains. It depends on Zn(2+) as a cofactor.

Functionally, involved in allosteric regulation of aspartate carbamoyltransferase. This chain is Aspartate carbamoyltransferase regulatory chain, found in Methanocorpusculum labreanum (strain ATCC 43576 / DSM 4855 / Z).